A 463-amino-acid polypeptide reads, in one-letter code: Dihydrolipoyllysine-residue succinyltransferase component of 2-oxoglutarate dehydrogenase complex, mitochondrial (463 aa).

The Lipoyl-binding domain occupies 73 to 148; the sequence is STSIEVPPMA…TVGEELAQVE (76 aa). At K114 the chain carries N6-lipoyllysine. The segment at 144 to 237 is disordered; that stretch reads LAQVEPGEAP…FTPFPRTETR (94 aa). Positions 148 to 157 are enriched in low complexity; it reads EPGEAPAEGS. Residues 184–212 are compositionally biased toward basic and acidic residues; the sequence is TASKKEAAPKKEAAPKKEVTEPKKADQPK. 3 repeat units span residues 185–190, 191–196, and 197–202. Positions 185–209 are 4 X 6 AA approximate tandem repeats of A-[SP]-K-K-E-[AV]; sequence ASKKEAAPKKEAAPKKEVTEPKKAD. The stretch at 204-209 is one 4; approximate repeat; sequence EPKKAD. Phosphothreonine is present on T340. Residues H435 and D439 contribute to the active site.

It belongs to the 2-oxoacid dehydrogenase family. Component of the 2-oxoglutarate dehydrogenase complex (OGDC), also called alpha-ketoglutarate dehydrogenase (KGDH) complex. The copmplex is composed of the catalytic subunits OGDH (2-oxoglutarate dehydrogenase KGD1; also called E1 subunit), DLST (dihydrolipoamide succinyltransferase KGD2; also called E2 subunit) and DLD (dihydrolipoamide dehydrogenase LPD1; also called E3 subunit), and the assembly factor KGD4. Requires (R)-lipoate as cofactor.

It is found in the mitochondrion. It catalyses the reaction N(6)-[(R)-dihydrolipoyl]-L-lysyl-[protein] + succinyl-CoA = N(6)-[(R)-S(8)-succinyldihydrolipoyl]-L-lysyl-[protein] + CoA. It functions in the pathway amino-acid degradation; L-lysine degradation via saccharopine pathway; glutaryl-CoA from L-lysine: step 6/6. The 2-oxoglutarate dehydrogenase complex catalyzes the overall conversion of 2-oxoglutarate to succinyl-CoA and CO(2). It contains multiple copies of three enzymatic components: 2-oxoglutarate dehydrogenase (E1), dihydrolipoamide succinyltransferase (E2) and lipoamide dehydrogenase (E3). This is Dihydrolipoyllysine-residue succinyltransferase component of 2-oxoglutarate dehydrogenase complex, mitochondrial (KGD2) from Saccharomyces cerevisiae (strain ATCC 204508 / S288c) (Baker's yeast).